The chain runs to 488 residues: Glutamyl-tRNA(Gln) amidotransferase subunit A (488 aa).

Active-site charge relay system residues include lysine 78 and serine 153. The active-site Acyl-ester intermediate is serine 177.

The protein belongs to the amidase family. GatA subfamily. In terms of assembly, heterotrimer of A, B and C subunits.

The catalysed reaction is L-glutamyl-tRNA(Gln) + L-glutamine + ATP + H2O = L-glutaminyl-tRNA(Gln) + L-glutamate + ADP + phosphate + H(+). Functionally, allows the formation of correctly charged Gln-tRNA(Gln) through the transamidation of misacylated Glu-tRNA(Gln) in organisms which lack glutaminyl-tRNA synthetase. The reaction takes place in the presence of glutamine and ATP through an activated gamma-phospho-Glu-tRNA(Gln). In Thermoanaerobacter pseudethanolicus (strain ATCC 33223 / 39E) (Clostridium thermohydrosulfuricum), this protein is Glutamyl-tRNA(Gln) amidotransferase subunit A.